The primary structure comprises 112 residues: Putative pterin-4-alpha-carbinolamine dehydratase (112 aa).

The protein belongs to the pterin-4-alpha-carbinolamine dehydratase family.

The enzyme catalyses (4aS,6R)-4a-hydroxy-L-erythro-5,6,7,8-tetrahydrobiopterin = (6R)-L-erythro-6,7-dihydrobiopterin + H2O. The sequence is that of Putative pterin-4-alpha-carbinolamine dehydratase from Shewanella piezotolerans (strain WP3 / JCM 13877).